Reading from the N-terminus, the 625-residue chain is Protein SUPPRESSOR OF GENE SILENCING 3 (625 aa).

Disordered stretches follow at residues 1–20 (MSSR…GYRP), 30–148 (AGTR…SAQH), and 161–195 (VDNA…QKSH). A compositionally biased stretch (polar residues) spans 54 to 70 (KPGNTSGKTWVSQNSNP). Over residues 80–94 (GRGSNVSGRGNNVSG) the composition is skewed to low complexity. Positions 161–188 (VDNASEEENDSDALDDSDDDLASDDYDS) are enriched in acidic residues. Coiled-coil stretches lie at residues 452 to 533 (KNKL…QQQE) and 564 to 615 (IEFQ…EQLM).

Belongs to the SGS3 family. Interacts with begomoviruses protein V2. Interacts with SGIP1 in cytoplasmic granules.

It localises to the cytoplasm. It is found in the perinuclear region. Its subcellular location is the cytoplasmic granule. Functionally, required for post-transcriptional gene silencing and natural virus resistance. May bind nucleic acids and is essential for the biogenesis of trans-acting siRNAs but is not required for silencing induced by IR-PTGS. Involved in the juvenile-to-adult transition regulation. In case of begomoviruses infection, it is targeted by the viral protein V2 leading to suppression of post-transcriptional gene silencing. Involved in the mechanisms necessary for quick response to heat and subsequent heritable transgenerational memory of heat acclimation (global warming) such as early flowering and attenuated immunity; this process includes epigenetic regulation as well as post-transcriptional gene silencing (PTGS). In response to heat, HSFA2 is activated and promotes the expression of REF6 which in turn derepresses HSFA2, thus establishing an inheritable feedback loop able to trigger SGIP1 and subsequent SGIP1-mediated SGS3 degradation; this prevents the biosynthesis of trans-acting siRNA (tasiRNA) and leads to the release of HTT5, which drives early flowering but attenuates immunity. The chain is Protein SUPPRESSOR OF GENE SILENCING 3 from Arabidopsis thaliana (Mouse-ear cress).